A 1209-amino-acid chain; its full sequence is ATP-dependent helicase/nuclease subunit A (1209 aa).

Positions 9 to 482 constitute a UvrD-like helicase ATP-binding domain; sequence SQWTDEQWQA…IDLAKNFRSR (474 aa). 30 to 37 provides a ligand contact to ATP; sequence AAAGSGKT. In terms of domain architecture, UvrD-like helicase C-terminal spans 510 to 798; it reads AALRFGAQDY…RMMTIHKSKG (289 aa).

The protein belongs to the helicase family. AddA subfamily. Heterodimer of AddA and AddB/RexB. The cofactor is Mg(2+).

It catalyses the reaction Couples ATP hydrolysis with the unwinding of duplex DNA by translocating in the 3'-5' direction.. The catalysed reaction is ATP + H2O = ADP + phosphate + H(+). Its function is as follows. The heterodimer acts as both an ATP-dependent DNA helicase and an ATP-dependent, dual-direction single-stranded exonuclease. Recognizes the chi site generating a DNA molecule suitable for the initiation of homologous recombination. The AddA nuclease domain is required for chi fragment generation; this subunit has the helicase and 3' -&gt; 5' nuclease activities. This chain is ATP-dependent helicase/nuclease subunit A, found in Anoxybacillus flavithermus (strain DSM 21510 / WK1).